The primary structure comprises 201 residues: dITP/XTP pyrophosphatase (201 aa).

8–13 serves as a coordination point for substrate; that stretch reads SNNPGK. Residues Glu40 and Asp69 each contribute to the Mg(2+) site. Asp69 acts as the Proton acceptor in catalysis. Residues Ser70, 155-158, Lys178, and 183-184 contribute to the substrate site; these read FGYD and HR.

This sequence belongs to the HAM1 NTPase family. Homodimer. Requires Mg(2+) as cofactor.

The enzyme catalyses XTP + H2O = XMP + diphosphate + H(+). It catalyses the reaction dITP + H2O = dIMP + diphosphate + H(+). It carries out the reaction ITP + H2O = IMP + diphosphate + H(+). Pyrophosphatase that catalyzes the hydrolysis of nucleoside triphosphates to their monophosphate derivatives, with a high preference for the non-canonical purine nucleotides XTP (xanthosine triphosphate), dITP (deoxyinosine triphosphate) and ITP. Seems to function as a house-cleaning enzyme that removes non-canonical purine nucleotides from the nucleotide pool, thus preventing their incorporation into DNA/RNA and avoiding chromosomal lesions. This Ralstonia nicotianae (strain ATCC BAA-1114 / GMI1000) (Ralstonia solanacearum) protein is dITP/XTP pyrophosphatase.